The following is a 164-amino-acid chain: MKSVITTVISAADSAGRFPSSSDLESVQGNIQRASARLEAAEKLASNHEAVVKEAGDACFGKYGYLKNPGEAGENQEKINKCYRDIDHYMRLVNYSLVIGGTGPLDEWGIAGAREVYRTLNLPTSAYIAAFAFTRDRLCGPRDMSAQAGVEYSTALDYIINSLS.

Residues asparagine 47, lysine 81, cysteine 82, arginine 84, histidine 88, arginine 137, cysteine 139, and arginine 142 each coordinate (2R,3E)-phycoerythrobilin.

The protein belongs to the phycobiliprotein family. In terms of assembly, heterododecamer of 6 alpha and 6 beta chains. The basic functional unit of phycobiliproteins is a ring-shaped hexamer formed from two back-to-back trimers contacting via the alpha chain subunits. The trimers are composed of alpha/beta subunit heterodimers arranged around a three-fold axis of symmetry. The phycoerythrins also contain a gamma subunit which is located in the center of the hexamer. Post-translationally, contains two covalently linked phycoerythrobilin chromophores.

The protein resides in the plastid. It is found in the chloroplast thylakoid membrane. Light-harvesting photosynthetic tetrapyrrole chromophore-protein from the phycobiliprotein complex. The sequence is that of R-phycoerythrin alpha chain (rpeA) from Agarophyton chilense (Red seaweed).